A 332-amino-acid polypeptide reads, in one-letter code: Ubiquinone biosynthesis protein COQ4, mitochondrial (332 aa).

The transit peptide at 1-16 (MFTVSKKSLQASRNAF) directs the protein to the mitochondrion. Residues H212, D213, H216, and E228 each contribute to the Zn(2+) site.

Belongs to the COQ4 family. As to quaternary structure, component of a multi-subunit COQ enzyme complex, composed of at least COQ3, COQ4, COQ5, COQ6, COQ7 and COQ9. The cofactor is Zn(2+).

The protein localises to the mitochondrion inner membrane. It catalyses the reaction a 4-hydroxy-3-methoxy-5-(all-trans-polyprenyl)benzoate + H(+) = a 2-methoxy-6-(all-trans-polyprenyl)phenol + CO2. It functions in the pathway cofactor biosynthesis; ubiquinone biosynthesis. Functionally, lyase that catalyzes the C1-decarboxylation of 4-hydroxy-3-methoxy-5-(all-trans-polyprenyl)benzoic acid into 2-methoxy-6-(all-trans-polyprenyl)phenol during ubiquinone biosynthesis. The sequence is that of Ubiquinone biosynthesis protein COQ4, mitochondrial from Kluyveromyces lactis (strain ATCC 8585 / CBS 2359 / DSM 70799 / NBRC 1267 / NRRL Y-1140 / WM37) (Yeast).